The sequence spans 393 residues: MAGPEWQSLEQCLEKHLPPDDLSQVKRILYGKQTRNLDLPRKALEAASERNFELKGYAFGAAKEQQRCPQIVRVGLVQNRIPLPTSAPVAEQVSALHKRIEEIAEVAAMCGVNIICFQEAWNMPFAFCTREKLPWTEFAESAEDGLTTRFCQKLAKKHNMVVISPILERDRDHGGVLWNTAVVISNSGLVMGKTRKNHIPRVGDFNESTYYMEGNLGHPVFQTQFGRIAVNICYGRHHPLNWLMYSVNGAEIIFNPSATIGELSESMWPIEARNAAIANHCFTCALNRVGQEHYPNEFTSGDGKKAHHDLGYFYGSSYVAAPDGSRTPGLSRNQDGLLVTELNLNLCQQINDFWTFKMTGRLEMYARELAEAVKPNYSPNIVKEDLVLAPSSG.

Positions 72–344 constitute a CN hydrolase domain; it reads VRVGLVQNRI…DGLLVTELNL (273 aa). The active-site Proton acceptor is Glu119. The Proton donor role is filled by Lys196. Cys233 functions as the Nucleophile in the catalytic mechanism. Ser378 bears the Phosphoserine mark.

This sequence belongs to the carbon-nitrogen hydrolase superfamily. BUP family. In terms of assembly, homodimer, homotetramer, homooctamer; can also form higher homooligomers. Post-translationally, the N-terminus is blocked. In terms of tissue distribution, detected in liver (at protein level).

It localises to the cytoplasm. The catalysed reaction is 3-(carbamoylamino)propanoate + H2O + 2 H(+) = beta-alanine + NH4(+) + CO2. It catalyses the reaction 3-(carbamoylamino)-2-methylpropanoate + H2O + 2 H(+) = (R)-3-amino-2-methylpropanoate + NH4(+) + CO2. The protein operates within amino-acid biosynthesis; beta-alanine biosynthesis. Allosteric enzyme with positive cooperativity toward the substrate N-carbamoyl-beta-alanine at low substrate concentrations (below 12 nM). Displays no cooperativity at substrate levels above 12 nM. Catalyzes a late step in pyrimidine degradation. Converts N-carbamoyl-beta-alanine (3-ureidopropanoate) into beta-alanine, ammonia and carbon dioxide. Likewise, converts N-carbamoyl-beta-aminoisobutyrate (3-ureidoisobutyrate) into beta-aminoisobutyrate, ammonia and carbon dioxide. This is Beta-ureidopropionase (Upb1) from Rattus norvegicus (Rat).